A 308-amino-acid polypeptide reads, in one-letter code: Bifunctional protein FolD (308 aa).

170 to 172 (GKG) is an NADP(+) binding site.

This sequence belongs to the tetrahydrofolate dehydrogenase/cyclohydrolase family. As to quaternary structure, homodimer.

The catalysed reaction is (6R)-5,10-methylene-5,6,7,8-tetrahydrofolate + NADP(+) = (6R)-5,10-methenyltetrahydrofolate + NADPH. It carries out the reaction (6R)-5,10-methenyltetrahydrofolate + H2O = (6R)-10-formyltetrahydrofolate + H(+). It participates in one-carbon metabolism; tetrahydrofolate interconversion. In terms of biological role, catalyzes the oxidation of 5,10-methylenetetrahydrofolate to 5,10-methenyltetrahydrofolate and then the hydrolysis of 5,10-methenyltetrahydrofolate to 10-formyltetrahydrofolate. The sequence is that of Bifunctional protein FolD from Pyrobaculum calidifontis (strain DSM 21063 / JCM 11548 / VA1).